A 189-amino-acid polypeptide reads, in one-letter code: Orotate phosphoribosyltransferase (189 aa).

5-phospho-alpha-D-ribose 1-diphosphate is bound by residues Arg99, Lys100, Lys103, His105, and 126 to 134 (EDVITTGGS). Orotate-binding residues include Thr130 and Arg158.

It belongs to the purine/pyrimidine phosphoribosyltransferase family. PyrE subfamily. Homodimer. Mg(2+) is required as a cofactor.

It catalyses the reaction orotidine 5'-phosphate + diphosphate = orotate + 5-phospho-alpha-D-ribose 1-diphosphate. The protein operates within pyrimidine metabolism; UMP biosynthesis via de novo pathway; UMP from orotate: step 1/2. In terms of biological role, catalyzes the transfer of a ribosyl phosphate group from 5-phosphoribose 1-diphosphate to orotate, leading to the formation of orotidine monophosphate (OMP). The protein is Orotate phosphoribosyltransferase of Thermosynechococcus vestitus (strain NIES-2133 / IAM M-273 / BP-1).